Reading from the N-terminus, the 312-residue chain is Olfactory receptor 2M5 (312 aa).

Residues 1 to 25 (MAWENQTFNSDFILLGIFNHSPTHT) lie on the Extracellular side of the membrane. A glycan (N-linked (GlcNAc...) asparagine) is linked at Asn5. Residues 26–49 (FLFFLVLAIFSVAFMGNSVMVLLI) traverse the membrane as a helical segment. Topologically, residues 50–57 (YLDTQLHT) are cytoplasmic. The helical transmembrane segment at 58-79 (PMYFLLSQLFLMDLMLICSTVP) threads the bilayer. Residues 80–100 (KMAFNYLSGSKSISMAGCATQ) lie on the Extracellular side of the membrane. Cys97 and Cys189 are disulfide-bonded. The chain crosses the membrane as a helical span at residues 101–120 (IFFYVSLLGSECFLLAVMSY). The Cytoplasmic segment spans residues 121–139 (DRYIAICHPLRYTNLMRPK). A helical transmembrane segment spans residues 140–158 (ICGLMTAFSWILGSMDAII). Residues 159-195 (DAVATFSFSYCGSREIAHFFCDFPSLLILSCNDTSIF) lie on the Extracellular side of the membrane. A helical membrane pass occupies residues 196–219 (EKVLFICCIVMIVFPVAIIIASYA). At 220-236 (RVILAVIHMGSGEGRRK) the chain is on the cytoplasmic side. The chain crosses the membrane as a helical span at residues 237–259 (AFTTCSSHLMVVGMYYGAGLFMY). Residues 260 to 272 (IRPTSDRSPMQDK) are Extracellular-facing. Residues 273–292 (LVSVFYTILTPMLNPLIYSL) traverse the membrane as a helical segment. At 293 to 311 (RNKEVTRALRKVLGKGKCG) the chain is on the cytoplasmic side.

Belongs to the G-protein coupled receptor 1 family.

The protein localises to the cell membrane. Its function is as follows. Odorant receptor. The protein is Olfactory receptor 2M5 (OR2M5) of Homo sapiens (Human).